The chain runs to 120 residues: NAD(P)H-quinone oxidoreductase subunit 3, chloroplastic (120 aa).

Transmembrane regions (helical) follow at residues 9–29 (IFWAFLIISSVIPILAFLISA), 64–84 (MFALVFVVFDVETVFLYPWAM), and 88–108 (VLGVPVFIEAFIFMLILIVGL).

This sequence belongs to the complex I subunit 3 family. NDH is composed of at least 16 different subunits, 5 of which are encoded in the nucleus.

The protein localises to the plastid. It is found in the chloroplast thylakoid membrane. It catalyses the reaction a plastoquinone + NADH + (n+1) H(+)(in) = a plastoquinol + NAD(+) + n H(+)(out). The enzyme catalyses a plastoquinone + NADPH + (n+1) H(+)(in) = a plastoquinol + NADP(+) + n H(+)(out). In terms of biological role, NDH shuttles electrons from NAD(P)H:plastoquinone, via FMN and iron-sulfur (Fe-S) centers, to quinones in the photosynthetic chain and possibly in a chloroplast respiratory chain. The immediate electron acceptor for the enzyme in this species is believed to be plastoquinone. Couples the redox reaction to proton translocation, and thus conserves the redox energy in a proton gradient. This is NAD(P)H-quinone oxidoreductase subunit 3, chloroplastic from Citrus sinensis (Sweet orange).